The primary structure comprises 370 residues: Putative agmatine deiminase (370 aa).

Residue cysteine 361 is the Amidino-cysteine intermediate of the active site.

Belongs to the agmatine deiminase family.

It catalyses the reaction agmatine + H2O = N-carbamoylputrescine + NH4(+). This Shewanella sp. (strain MR-4) protein is Putative agmatine deiminase.